The primary structure comprises 548 residues: Probable aquaglyceroporin-4 (548 aa).

Positions 1–22 (MAGTQDQSQDYFSKPTTPSTPG) are enriched in polar residues. Disordered stretches follow at residues 1–63 (MAGT…LPST), 76–101 (SRGF…SHFH), and 158–270 (KEET…ESGD). The Cytoplasmic segment spans residues 1–290 (MAGTQDQSQD…ARLRARHPEP (290 aa)). Over residues 38–48 (PDRESGTERAK) the composition is skewed to basic and acidic residues. 2 stretches are compositionally biased toward polar residues: residues 77–97 (RGFS…PQHS) and 171–200 (SRTT…SRTT). Positions 249–265 (PDFKVDGEPLGHQEKPC) are enriched in basic and acidic residues. The chain crosses the membrane as a helical span at residues 291–311 (LAEFLATAVAIFLGLTGTLSV). Asn-312 carries an N-linked (GlcNAc...) asparagine glycan. Residues 312 to 327 (NLSATQSQPYGTYETS) lie on the Extracellular side of the membrane. The chain crosses the membrane as a helical span at residues 328 to 348 (CWAWGFAWMFGIYLGGGVSGA). Residues 349–369 (HMNPAISVSLSIFRGFPWRQC) lie on the Cytoplasmic side of the membrane. Positions 351–353 (NPA) match the NPA 1 motif. The chain crosses the membrane as a helical span at residues 370 to 390 (VIYVFVQFIASIVAGALAYAM). Topologically, residues 391–420 (YADSINHVDPDMTKMSMTFFSTPREWVTLK) are extracellular. The chain crosses the membrane as a helical span at residues 421–441 (SAFFNQVVGSAIMMIAVFALG). The Cytoplasmic portion of the chain corresponds to 442–448 (DDQNNPP). Residues 449-469 (GAGMHALVLGFLVTTLKFTLG) form a helical membrane-spanning segment. Residues 470–508 (YNIGSALNPASDFGPRVIAYAVGFRGDNVFHSGWWFYGP) are Extracellular-facing. The NPA 2 motif lies at 477–479 (NPA). Residues 509-529 (WAATLIGSLLGCTLYDGFVFV) traverse the membrane as a helical segment. The Cytoplasmic portion of the chain corresponds to 530–548 (GSESPVNFRVDKRVKKLFN).

This sequence belongs to the MIP/aquaporin (TC 1.A.8) family.

It localises to the membrane. It carries out the reaction H2O(in) = H2O(out). It catalyses the reaction glycerol(in) = glycerol(out). Probable water/glycerol channel that may have redundant functions with FgAQP2. This Gibberella zeae (strain ATCC MYA-4620 / CBS 123657 / FGSC 9075 / NRRL 31084 / PH-1) (Wheat head blight fungus) protein is Probable aquaglyceroporin-4.